The following is a 743-amino-acid chain: Serine/threonine-protein kinase GD17699 (743 aa).

A disordered region spans residues 54-78; that stretch reads NVQEDNSYNRDCDSPVSSSSEPEKE. 2 consecutive Doublecortin domains span residues 154–240 and 309–392; these read LRIK…VEYN and RIVT…AEDF. In terms of domain architecture, Protein kinase spans 473–731; the sequence is YTLGRIIGDG…SEDILDHPWT (259 aa). ATP is bound by residues 479 to 487 and lysine 502; that span reads IGDGNFAIV. Catalysis depends on aspartate 594, which acts as the Proton acceptor.

The protein belongs to the protein kinase superfamily. CAMK Ser/Thr protein kinase family. CaMK subfamily.

It catalyses the reaction L-seryl-[protein] + ATP = O-phospho-L-seryl-[protein] + ADP + H(+). It carries out the reaction L-threonyl-[protein] + ATP = O-phospho-L-threonyl-[protein] + ADP + H(+). This is Serine/threonine-protein kinase GD17699 from Drosophila simulans (Fruit fly).